A 139-amino-acid polypeptide reads, in one-letter code: MRTLWIVAVWLMGVEGNLYQFGKMIKNKTGKPAMFSYSAYGCYCGWGGQGKPQDPSDRCCFMHDCCYTRVNNCSPKMTLYSYRFENGDIICGDNDPCRKAVCECDREAAICLGENVNTYDEKYRFYSSSYCTEEESEKC.

Residues 1-16 form the signal peptide; that stretch reads MRTLWIVAVWLMGVEG. Disulfide bonds link cysteine 42–cysteine 131, cysteine 44–cysteine 60, cysteine 59–cysteine 111, cysteine 65–cysteine 139, cysteine 66–cysteine 104, cysteine 73–cysteine 97, and cysteine 91–cysteine 102. Residues tyrosine 43, glycine 45, and glycine 47 each contribute to the Ca(2+) site. Histidine 63 is a catalytic residue. A Ca(2+)-binding site is contributed by aspartate 64. The active site involves aspartate 105.

It belongs to the phospholipase A2 family. Group II subfamily. D49 sub-subfamily. The cofactor is Ca(2+). Expressed by the venom gland.

The protein localises to the secreted. The enzyme catalyses a 1,2-diacyl-sn-glycero-3-phosphocholine + H2O = a 1-acyl-sn-glycero-3-phosphocholine + a fatty acid + H(+). Functionally, PLA2 catalyzes the calcium-dependent hydrolysis of the 2-acyl groups in 3-sn-phosphoglycerides. The chain is Acidic phospholipase A2 5 from Echis pyramidum leakeyi (Leakey's carpet viper).